The sequence spans 328 residues: MIEKIWFDNHFLGKLLWPLLWPLSCLFKWIATKRKSDYQSGKKQSYRSSVPVVVVGNITAGGNGKTPVVVWLVEQLQSKGYKVGVASRGYGGKAPHYPYLLTETTTPDISGDEPVLIKQRTKAEVAVAPVRSEAVKMLEQQGVDFIITDDGLQHYALQRDIEFIVIDGKRRFGNQHYIPLGPLREGVERLSSVDFLICNGGEPQENEVSMRLQPSEAINLVTGERRSVSSLSNLVAFAGIGHPPRFFETLNQLKANVVHTQGFEDHKAFEPTEIEQLMQYGEQLIMTEKDAVKCQSFAQSSWWYLPVDATFPEEKAQQILNKIIEVKE.

59 to 66 (TAGGNGKT) serves as a coordination point for ATP.

It belongs to the LpxK family.

It carries out the reaction a lipid A disaccharide + ATP = a lipid IVA + ADP + H(+). Its pathway is glycolipid biosynthesis; lipid IV(A) biosynthesis; lipid IV(A) from (3R)-3-hydroxytetradecanoyl-[acyl-carrier-protein] and UDP-N-acetyl-alpha-D-glucosamine: step 6/6. Functionally, transfers the gamma-phosphate of ATP to the 4'-position of a tetraacyldisaccharide 1-phosphate intermediate (termed DS-1-P) to form tetraacyldisaccharide 1,4'-bis-phosphate (lipid IVA). This chain is Tetraacyldisaccharide 4'-kinase, found in Aliivibrio fischeri (strain MJ11) (Vibrio fischeri).